Reading from the N-terminus, the 162-residue chain is Putative auxin-responsive protein IAA28 (162 aa).

A PB1 domain is found at 23–118; it reads SRFVKVFMHG…TVKRIYIVPA (96 aa). A disordered region spans residues 122-141; sequence NESEYQEEEEDNAAAAATAD.

Belongs to the Aux/IAA family. In terms of assembly, homodimers and heterodimers.

The protein resides in the nucleus. Its function is as follows. Aux/IAA proteins are short-lived transcriptional factors that function as repressors of early auxin response genes at low auxin concentrations. The sequence is that of Putative auxin-responsive protein IAA28 (IAA28) from Oryza sativa subsp. japonica (Rice).